Consider the following 470-residue polypeptide: Glutamate--tRNA ligase (470 aa).

The short motif at 9–19 (PSPTGFLHVGG) is the 'HIGH' region element. The 'KMSKS' region motif lies at 236 to 240 (RLSKR). ATP is bound at residue K239.

This sequence belongs to the class-I aminoacyl-tRNA synthetase family. Glutamate--tRNA ligase type 1 subfamily. Monomer.

The protein resides in the cytoplasm. It catalyses the reaction tRNA(Glu) + L-glutamate + ATP = L-glutamyl-tRNA(Glu) + AMP + diphosphate. Catalyzes the attachment of glutamate to tRNA(Glu) in a two-step reaction: glutamate is first activated by ATP to form Glu-AMP and then transferred to the acceptor end of tRNA(Glu). This chain is Glutamate--tRNA ligase, found in Legionella pneumophila (strain Lens).